We begin with the raw amino-acid sequence, 156 residues long: MNLNATILGQAIAFVLFVLFCMKYIWPPIMAAIEKRQKEIADGLSSAERAKKDLDLAQANATDQLKKAKAEAQVIIEQASKRKAQILDEAKAEAEQERNKIVAQAQAEIDAERKRAREELRKQVAMLAIAGAEKIIERSVDEAANSDIVDKLVAEL.

Residues 11-31 (AIAFVLFVLFCMKYIWPPIMA) traverse the membrane as a helical segment.

Belongs to the ATPase B chain family. As to quaternary structure, F-type ATPases have 2 components, F(1) - the catalytic core - and F(0) - the membrane proton channel. F(1) has five subunits: alpha(3), beta(3), gamma(1), delta(1), epsilon(1). F(0) has three main subunits: a(1), b(2) and c(10-14). The alpha and beta chains form an alternating ring which encloses part of the gamma chain. F(1) is attached to F(0) by a central stalk formed by the gamma and epsilon chains, while a peripheral stalk is formed by the delta and b chains.

The protein resides in the cell inner membrane. Functionally, f(1)F(0) ATP synthase produces ATP from ADP in the presence of a proton or sodium gradient. F-type ATPases consist of two structural domains, F(1) containing the extramembraneous catalytic core and F(0) containing the membrane proton channel, linked together by a central stalk and a peripheral stalk. During catalysis, ATP synthesis in the catalytic domain of F(1) is coupled via a rotary mechanism of the central stalk subunits to proton translocation. Its function is as follows. Component of the F(0) channel, it forms part of the peripheral stalk, linking F(1) to F(0). This is ATP synthase subunit b from Yersinia enterocolitica serotype O:8 / biotype 1B (strain NCTC 13174 / 8081).